A 1181-amino-acid polypeptide reads, in one-letter code: C5a peptidase (1181 aa).

The signal sequence occupies residues 1-31 (MRKKQKLPFDKLAIALMSTSILLNAQSDIKA). Residues 33–52 (TVTEDTPATEQAVETPQPTA) are compositionally biased toward polar residues. The interval 33-117 (TVTEDTPATE…PSQVKTLQEK (85 aa)) is disordered. Positions 70 to 81 (DDAEETIADDAN) are enriched in acidic residues. Positions 99–581 (KATIRDLNDP…AGAVDAKKAS (483 aa)) constitute a Peptidase S8 domain. Active-site charge relay system residues include Asp-130, His-193, and Ser-512. 4 stretches are compositionally biased toward basic and acidic residues: residues 1029–1054 (EGHS…KPEQ), 1061–1071 (PDKKPETKPEQ), 1078–1088 (PDKKPETKPEQ), and 1095–1107 (PDKK…EKDS). The interval 1029 to 1150 (EGHSNKPEQD…KDQLPTTNDK (122 aa)) is disordered. Tandem repeats lie at residues 1034-1050 (KPEQ…KPET), 1051-1067 (KPEQ…KPET), 1068-1084 (KPEQ…KPET), 1085-1101 (KPEQ…KPET), and 1102-1118 (KPEK…TPQK). The interval 1034–1118 (KPEQDGSDQA…GQTPGKTPQK (85 aa)) is 5 X 17 AA tandem repeats. Composition is skewed to polar residues over residues 1109–1123 (GQTP…QPSR) and 1137–1147 (KASTKDQLPTT). Residues 1144-1148 (LPTTN) carry the LPXTG sorting signal motif. A Pentaglycyl murein peptidoglycan amidated threonine modification is found at Thr-1147. Residues 1148–1181 (NDKDTNRLHLLKLVMTTFFLGLVAHIFKTKRTED) constitute a propeptide, removed by sortase.

This sequence belongs to the peptidase S8 family. Cleaved by SpeB protease; leading to its degradation. Degradation by SpeB is probably strictly regulated to preserve integrity of C5a peptidase.

Its subcellular location is the secreted. It localises to the cell wall. It carries out the reaction The primary cleavage site is at 67-His-|-Lys-68 in human C5a with a minor secondary cleavage site at 58-Ala-|-Ser-59.. In terms of biological role, this virulence factor of S.pyogenes specifically cleaves the human serum chemotaxin C5a at '68-Lys-|-Asp-69' bond near its C-terminus, destroying its ability to serve as a chemoattractant. This chain is C5a peptidase (scpA), found in Streptococcus pyogenes serotype M1.